The chain runs to 31 residues: Sarcolipin (31 aa).

The Cytoplasmic portion of the chain corresponds to Met-1 to Glu-7. A helical transmembrane segment spans residues Leu-8–Val-26. Residues Arg-27–Tyr-31 lie on the Lumenal side of the membrane.

The protein belongs to the sarcolipin family. As to quaternary structure, homooligomer. Can also form heterooligomers with other sarcoplasmic/endoplasmic reticulum calcium ATPase (SERCA) regulators ARLN, ERLN, PLN and STRIT1/DWORF. Monomer. Interacts with calcium ATPase ATP2A1/SERCA1. Interacts as a monomer with ATP2A2/SERCA2; the interaction decreases ATP2A2 Ca(2+) affinity. Interacts with VMP1; VMP1 competes with PLN and SLN to prevent them from forming an inhibitory complex with ATP2A2. Skeletal muscle (at protein level).

The protein resides in the sarcoplasmic reticulum membrane. It is found in the endoplasmic reticulum membrane. Its function is as follows. Reversibly inhibits the activity of ATP2A1/SERCA1 and ATP2A2/SERCA2 in sarcoplasmic reticulum by decreasing the apparent affinity of the ATPase for Ca(2+). Also inhibits the activity of ATP2A3/SERCA3. Modulates calcium re-uptake during muscle relaxation and plays an important role in calcium homeostasis in muscle. Required for muscle-based, non-shivering thermogenesis. This is Sarcolipin (SLN) from Oryctolagus cuniculus (Rabbit).